Consider the following 194-residue polypeptide: Large ribosomal subunit protein bL25 (194 aa).

The protein belongs to the bacterial ribosomal protein bL25 family. CTC subfamily. As to quaternary structure, part of the 50S ribosomal subunit; part of the 5S rRNA/L5/L18/L25 subcomplex. Contacts the 5S rRNA. Binds to the 5S rRNA independently of L5 and L18.

Its function is as follows. This is one of the proteins that binds to the 5S RNA in the ribosome where it forms part of the central protuberance. This is Large ribosomal subunit protein bL25 from Geobacter sulfurreducens (strain ATCC 51573 / DSM 12127 / PCA).